A 287-amino-acid chain; its full sequence is Large ribosomal subunit protein uL2 (287 aa).

The disordered stretch occupies residues 222-266; sequence RGIRPTVRGSAMNPNDHPHGGGEGRSPVGRDAPRTPWGKRHMGVK.

It belongs to the universal ribosomal protein uL2 family. In terms of assembly, part of the 50S ribosomal subunit. Forms a bridge to the 30S subunit in the 70S ribosome.

In terms of biological role, one of the primary rRNA binding proteins. Required for association of the 30S and 50S subunits to form the 70S ribosome, for tRNA binding and peptide bond formation. It has been suggested to have peptidyltransferase activity; this is somewhat controversial. Makes several contacts with the 16S rRNA in the 70S ribosome. In Mycoplasma pneumoniae (strain ATCC 29342 / M129 / Subtype 1) (Mycoplasmoides pneumoniae), this protein is Large ribosomal subunit protein uL2.